The chain runs to 199 residues: Adenylyl-sulfate kinase (199 aa).

34-41 contacts ATP; it reads GLSGSGKS. S108 (phosphoserine intermediate) is an active-site residue.

The protein belongs to the APS kinase family.

The catalysed reaction is adenosine 5'-phosphosulfate + ATP = 3'-phosphoadenylyl sulfate + ADP + H(+). Its pathway is sulfur metabolism; hydrogen sulfide biosynthesis; sulfite from sulfate: step 2/3. Its function is as follows. Catalyzes the synthesis of activated sulfate. The chain is Adenylyl-sulfate kinase from Staphylococcus carnosus (strain TM300).